Reading from the N-terminus, the 427-residue chain is Light-independent protochlorophyllide reductase subunit N (427 aa).

[4Fe-4S] cluster is bound by residues cysteine 30, cysteine 55, and cysteine 116.

This sequence belongs to the BchN/ChlN family. In terms of assembly, protochlorophyllide reductase is composed of three subunits; BchL, BchN and BchB. Forms a heterotetramer of two BchB and two BchN subunits. [4Fe-4S] cluster is required as a cofactor.

It catalyses the reaction chlorophyllide a + oxidized 2[4Fe-4S]-[ferredoxin] + 2 ADP + 2 phosphate = protochlorophyllide a + reduced 2[4Fe-4S]-[ferredoxin] + 2 ATP + 2 H2O. The protein operates within porphyrin-containing compound metabolism; bacteriochlorophyll biosynthesis (light-independent). Component of the dark-operative protochlorophyllide reductase (DPOR) that uses Mg-ATP and reduced ferredoxin to reduce ring D of protochlorophyllide (Pchlide) to form chlorophyllide a (Chlide). This reaction is light-independent. The NB-protein (BchN-BchB) is the catalytic component of the complex. This chain is Light-independent protochlorophyllide reductase subunit N, found in Rhodopseudomonas palustris (strain BisA53).